The chain runs to 319 residues: Eukaryotic translation initiation factor 3 subunit H (319 aa).

One can recognise an MPN domain in the interval 19–153 (VQIDGLVVLK…LKCYRLTQSF (135 aa)).

Belongs to the eIF-3 subunit H family. As to quaternary structure, component of the eukaryotic translation initiation factor 3 (eIF-3) complex.

The protein resides in the cytoplasm. Its function is as follows. Component of the eukaryotic translation initiation factor 3 (eIF-3) complex, which is involved in protein synthesis of a specialized repertoire of mRNAs and, together with other initiation factors, stimulates binding of mRNA and methionyl-tRNAi to the 40S ribosome. The eIF-3 complex specifically targets and initiates translation of a subset of mRNAs involved in cell proliferation. The protein is Eukaryotic translation initiation factor 3 subunit H (eif3H) of Dictyostelium discoideum (Social amoeba).